The primary structure comprises 637 residues: ATP-dependent zinc metalloprotease FtsH (637 aa).

Topologically, residues 1-6 are cytoplasmic; that stretch reads MNNQGR. The helical transmembrane segment at 7–27 threads the bilayer; that stretch reads SILAWATLFIFVILLFNVFQS. Over 28–103 the chain is Periplasmic; the sequence is DSLLGGRNNI…VVPLETRMNT (76 aa). A helical transmembrane segment spans residues 104–124; it reads FLGFLISWFPMLLLIGVWVFF. The Cytoplasmic segment spans residues 125-637; sequence MRQMHGGGKA…TKAKKENYAS (513 aa). 195 to 202 contacts ATP; the sequence is GPPGTGKT. H417 serves as a coordination point for Zn(2+). E418 is an active-site residue. 2 residues coordinate Zn(2+): H421 and D495. Positions 603–637 are disordered; that stretch reads ENKFPFNDSSTIKIDKEKSPEKTKTTKAKKENYAS. The span at 615–637 shows a compositional bias: basic and acidic residues; it reads KIDKEKSPEKTKTTKAKKENYAS.

In the central section; belongs to the AAA ATPase family. This sequence in the C-terminal section; belongs to the peptidase M41 family. As to quaternary structure, homohexamer. Zn(2+) is required as a cofactor.

It localises to the cell inner membrane. In terms of biological role, acts as a processive, ATP-dependent zinc metallopeptidase for both cytoplasmic and membrane proteins. Plays a role in the quality control of integral membrane proteins. This is ATP-dependent zinc metalloprotease FtsH from Rickettsia conorii (strain ATCC VR-613 / Malish 7).